The primary structure comprises 893 residues: Protein translocase subunit SecA (893 aa).

ATP contacts are provided by residues Gln-87, Gly-105–Thr-109, and Asp-512. A compositionally biased stretch (basic and acidic residues) spans Val-840–Glu-849. Residues Val-840–Ala-893 are disordered. Residues Gln-855–Thr-868 show a composition bias toward polar residues. Positions 877, 879, 888, and 889 each coordinate Zn(2+). The segment covering Lys-883–Ala-893 has biased composition (basic residues).

Belongs to the SecA family. Monomer and homodimer. Part of the essential Sec protein translocation apparatus which comprises SecA, SecYEG and auxiliary proteins SecDF-YajC and YidC. The cofactor is Zn(2+).

It is found in the cell inner membrane. Its subcellular location is the cytoplasm. The catalysed reaction is ATP + H2O + cellular proteinSide 1 = ADP + phosphate + cellular proteinSide 2.. Part of the Sec protein translocase complex. Interacts with the SecYEG preprotein conducting channel. Has a central role in coupling the hydrolysis of ATP to the transfer of proteins into and across the cell membrane, serving both as a receptor for the preprotein-SecB complex and as an ATP-driven molecular motor driving the stepwise translocation of polypeptide chains across the membrane. This chain is Protein translocase subunit SecA, found in Colwellia psychrerythraea (strain 34H / ATCC BAA-681) (Vibrio psychroerythus).